The chain runs to 397 residues: Acetate kinase (397 aa).

Asn8 provides a ligand contact to Mg(2+). Lys15 serves as a coordination point for ATP. Arg89 serves as a coordination point for substrate. Asp146 serves as the catalytic Proton donor/acceptor. Residues 206 to 210 (HVGNG), 283 to 285 (DMR), and 331 to 335 (GMGEN) contribute to the ATP site. Mg(2+) is bound at residue Glu383.

Belongs to the acetokinase family. In terms of assembly, homodimer. The cofactor is Mg(2+). It depends on Mn(2+) as a cofactor.

The protein localises to the cytoplasm. It catalyses the reaction acetate + ATP = acetyl phosphate + ADP. It participates in metabolic intermediate biosynthesis; acetyl-CoA biosynthesis; acetyl-CoA from acetate: step 1/2. In terms of biological role, catalyzes the formation of acetyl phosphate from acetate and ATP. Can also catalyze the reverse reaction. In Streptococcus agalactiae serotype Ia (strain ATCC 27591 / A909 / CDC SS700), this protein is Acetate kinase.